Reading from the N-terminus, the 535-residue chain is Dual specificity calcium/calmodulin-dependent 3',5'-cyclic nucleotide phosphodiesterase 1B (535 aa).

The interval 1 to 21 is disordered; the sequence is MELSPRSPPEMLESDCPSPLE. A phosphoserine mark is found at Ser7 and Ser14. Calmodulin-binding stretches follow at residues 26-46 and 117-140; these read PSKK…KQLE and EKPK…MFRR. One can recognise a PDEase domain in the interval 145-502; it reads VGPTYSTAVH…QKWKERAASG (358 aa). Catalysis depends on His222, which acts as the Proton donor. Zn(2+) contacts are provided by His226, His262, Asp263, and Asp369. Residue Asp263 coordinates Mg(2+). Disordered regions lie at residues 445–474 and 495–535; these read PLAD…GDPN and WKER…GNLD. Positions 454–463 are enriched in polar residues; it reads KSQPSFQWRQ. Residues Ser465 and Ser513 each carry the phosphoserine modification.

The protein belongs to the cyclic nucleotide phosphodiesterase family. PDE1 subfamily. As to quaternary structure, homodimer. Zn(2+) is required as a cofactor. It depends on Mg(2+) as a cofactor.

It is found in the cytoplasm. The protein resides in the cytosol. The enzyme catalyses a nucleoside 3',5'-cyclic phosphate + H2O = a nucleoside 5'-phosphate + H(+). The catalysed reaction is 3',5'-cyclic GMP + H2O = GMP + H(+). It carries out the reaction 3',5'-cyclic AMP + H2O = AMP + H(+). With respect to regulation, type I PDE are activated by the binding of calmodulin in the presence of Ca(2+). Cyclic nucleotide phosphodiesterase with a dual specificity for the second messengers cAMP and cGMP, which are key regulators of many important physiological processes. Has a preference for cGMP as a substrate. The chain is Dual specificity calcium/calmodulin-dependent 3',5'-cyclic nucleotide phosphodiesterase 1B from Cricetulus griseus (Chinese hamster).